Consider the following 354-residue polypeptide: Probable trehalose-phosphate phosphatase E (354 aa).

Belongs to the trehalose phosphatase family. A divalent metal cation is required as a cofactor.

The enzyme catalyses alpha,alpha-trehalose 6-phosphate + H2O = alpha,alpha-trehalose + phosphate. It functions in the pathway glycan biosynthesis; trehalose biosynthesis. Removes the phosphate from trehalose 6-phosphate to produce free trehalose. Trehalose accumulation in plant may improve abiotic stress tolerance. The chain is Probable trehalose-phosphate phosphatase E (TPPE) from Arabidopsis thaliana (Mouse-ear cress).